The following is a 314-amino-acid chain: MTRRNQTAISQFFLLGLPFPPEYQHLFYALFLAMYLTTLLGNLIIIILILLDSHLHTPMYLFLSNLSFADLCFSSVTMPKLLQNMQSQVPSIPYAGCLAQIYFFLFFGDLGNFLLVAMAYDRYVAICFPLHYMSIMSPKLCVSLVVLSWVLTTFHAMLHTLLMARLSFCEDSVIPHYFCDMSTLLKVACSDTHDNELAIFILGGPIVVLPFLLIIVSYARIVSSIFKVPSSQSIHKAFSTCGSHLSVVSLFYGTVIGLYLCPSANNSTVKETVMSLMYTMVTPMLNPFIYSLRNRDIKDALEKIMCKKQIPSFL.

At 1-25 the chain is on the extracellular side; it reads MTRRNQTAISQFFLLGLPFPPEYQH. N-linked (GlcNAc...) asparagine glycosylation is present at Asn-5. The helical transmembrane segment at 26–50 threads the bilayer; it reads LFYALFLAMYLTTLLGNLIIIILIL. Topologically, residues 51-57 are cytoplasmic; that stretch reads LDSHLHT. A helical transmembrane segment spans residues 58 to 79; it reads PMYLFLSNLSFADLCFSSVTMP. At 80–100 the chain is on the extracellular side; it reads KLLQNMQSQVPSIPYAGCLAQ. Cys-97 and Cys-189 form a disulfide bridge. The helical transmembrane segment at 101-120 threads the bilayer; that stretch reads IYFFLFFGDLGNFLLVAMAY. Residues 121–139 lie on the Cytoplasmic side of the membrane; sequence DRYVAICFPLHYMSIMSPK. A helical transmembrane segment spans residues 140–158; that stretch reads LCVSLVVLSWVLTTFHAML. Over 159–196 the chain is Extracellular; the sequence is HTLLMARLSFCEDSVIPHYFCDMSTLLKVACSDTHDNE. The helical transmembrane segment at 197–219 threads the bilayer; sequence LAIFILGGPIVVLPFLLIIVSYA. Over 220–236 the chain is Cytoplasmic; it reads RIVSSIFKVPSSQSIHK. A helical membrane pass occupies residues 237 to 260; it reads AFSTCGSHLSVVSLFYGTVIGLYL. Over 261–272 the chain is Extracellular; it reads CPSANNSTVKET. Residues 273-292 traverse the membrane as a helical segment; it reads VMSLMYTMVTPMLNPFIYSL. The Cytoplasmic portion of the chain corresponds to 293 to 314; that stretch reads RNRDIKDALEKIMCKKQIPSFL.

This sequence belongs to the G-protein coupled receptor 1 family. In terms of tissue distribution, olfactory epithelium.

Its subcellular location is the cell membrane. In terms of biological role, odorant receptor. This Rattus norvegicus (Rat) protein is Olfactory receptor-like protein I9.